We begin with the raw amino-acid sequence, 61 residues long: MDPNCSCPTGGSCSCAGSCTCKACRCTSCKKSCCSCCPVGCAKCAQGCICKGASDKCSCCA.

N-acetylmethionine is present on M1. The segment at 1-29 is beta; that stretch reads MDPNCSCPTGGSCSCAGSCTCKACRCTSC. Residues C5, C7, C13, C15, C19, C21, C24, C26, C29, C33, C34, C36, C37, C41, C44, C48, C50, C57, C59, and C60 each contribute to the a divalent metal cation site. The interval 30–61 is alpha; sequence KKSCCSCCPVGCAKCAQGCICKGASDKCSCCA.

This sequence belongs to the metallothionein superfamily. Type 1 family. Monomer.

Functionally, metallothioneins have a high content of cysteine residues that bind various heavy metals; these proteins are transcriptionally regulated by both heavy metals and glucocorticoids. The sequence is that of Metallothionein-1E (MT1E) from Sus scrofa (Pig).